The primary structure comprises 558 residues: Outer membrane transporter CdiB (558 aa).

A signal peptide spans 1 to 25 (MFVSSRKTGLIVCFSLIGYTASAFS). Residues 34–62 (NETQQRQSEVIEQSRQQREALQQLNNIVQ) adopt a coiled-coil conformation. A POTRA domain is found at 76-151 (FTLREIRFNH…GVLQLEILEG (76 aa)).

This sequence belongs to the TPS (TC 1.B.20) family.

It localises to the cell outer membrane. Its function is as follows. Probable outer membrane protein component of a toxin-immunity protein module, which functions as a cellular contact-dependent growth inhibition (CDI) system. CDI modules allow bacteria to communicate with and inhibit the growth of closely related neighboring bacteria in a contact-dependent fashion. This protein may be required for secretion and assembly of the CdiA toxin. Probable member of a two partner secretion pathway (TPS) in which it mediates the secretion of CdiA. In Dickeya dadantii (strain 3937) (Erwinia chrysanthemi (strain 3937)), this protein is Outer membrane transporter CdiB (cdiB).